A 147-amino-acid polypeptide reads, in one-letter code: UPF0275 protein PM0504 (147 aa).

Belongs to the UPF0275 family.

The protein is UPF0275 protein PM0504 of Pasteurella multocida (strain Pm70).